The following is a 381-amino-acid chain: Pentatricopeptide repeat-containing protein 2, mitochondrial (381 aa).

One copy of the PPR repeat lies at 159-193; the sequence is TSFNILMDMLFTKGKYERALQVLIEMKNQDVRFSK. At S375 the chain carries Phosphoserine.

It belongs to the PTCD2 family. As to expression, high expression in heart and liver and low expression in kidney, brain and testis.

Its subcellular location is the mitochondrion. Its function is as follows. Involved in mitochondrial RNA maturation and mitochondrial respiratory chain function. The chain is Pentatricopeptide repeat-containing protein 2, mitochondrial (Ptcd2) from Mus musculus (Mouse).